The chain runs to 226 residues: 7-cyano-7-deazaguanine synthase (226 aa).

Residue 10–20 (LSGGLDSATAA) coordinates ATP. Cys191, Cys199, Cys202, and Cys205 together coordinate Zn(2+).

The protein belongs to the QueC family. Zn(2+) is required as a cofactor.

It carries out the reaction 7-carboxy-7-deazaguanine + NH4(+) + ATP = 7-cyano-7-deazaguanine + ADP + phosphate + H2O + H(+). It functions in the pathway purine metabolism; 7-cyano-7-deazaguanine biosynthesis. Catalyzes the ATP-dependent conversion of 7-carboxy-7-deazaguanine (CDG) to 7-cyano-7-deazaguanine (preQ(0)). This is 7-cyano-7-deazaguanine synthase from Synechococcus sp. (strain CC9902).